The sequence spans 708 residues: Exocyst complex component 5 (708 aa).

Ala-2 carries the N-acetylalanine modification. Residues 40 to 101 (KRLLEEFVNH…AFQHFQELDE (62 aa)) are a coiled coil. Phosphothreonine is present on residues Thr-122, Thr-395, and Thr-405. The residue at position 412 (Ser-412) is a Phosphoserine.

Belongs to the SEC10 family. In terms of assembly, the exocyst complex is composed of EXOC1, EXOC2, EXOC3, EXOC4, EXOC5, EXOC6, EXOC7 and EXOC8. Interacts with EXOC3L1. In terms of tissue distribution, ubiquitous.

It is found in the cytoplasm. The protein resides in the midbody. Component of the exocyst complex involved in the docking of exocytic vesicles with fusion sites on the plasma membrane. The polypeptide is Exocyst complex component 5 (Exoc5) (Rattus norvegicus (Rat)).